A 436-amino-acid polypeptide reads, in one-letter code: Homeobox protein PKNOX1 (436 aa).

The interval 23 to 50 (ELKTEQDPNCSDPDAEGVSPPPIESQTP) is disordered. Phosphoserine occurs at positions 33 and 41. The 84-residue stretch at 80–163 (GSEGTTSASF…MNSETLLSGE (84 aa)) folds into the MEIS N-terminal domain. Positions 259–321 (SKNKRGVLPK…NARRRILQPM (63 aa)) form a DNA-binding region, homeobox; TALE-type. The disordered stretch occupies residues 401-436 (AGQSEDESVDSTEDEGGALAPTHISGLVLENSDSLQ). Residues 404–416 (SEDESVDSTEDEG) are compositionally biased toward acidic residues.

The protein belongs to the TALE/MEIS homeobox family. In terms of assembly, interacts with MN1.

Its subcellular location is the nucleus. Activates transcription in the presence of PBX1A and HOXA1. Functionally, (Microbial infection) In complex with PBX1, binds to the 5'-TGATTGAC-3' consensus sequence in the U5 region of Moloney murine leukemia virus and promotes viral transcription. In Mus musculus (Mouse), this protein is Homeobox protein PKNOX1.